Reading from the N-terminus, the 416-residue chain is MDPEAFSASLFKWDPRGAMPPPTRLLEAAVAPPPPPPALPPPQPLSAAYSIKTRELGGLEELFQAYGIRYYTAAKIAELGFTVNTLLDMKDEELDDMMNSLSQIFRWELLVGERYGIKAAIRAERRRLEEEELRRRGHLLSDGGTNALDALSQEGLSEEPVQQQEREAVGSGGGGTTWEVVAAAGGGRMKQRRRKKVVAAGREKRGGASAEEDEETEEGQEDDWNINDASGGISERQREHPFIVTEPGEVARGKKNGLDYLFHLYEQCRDFLIQVQNIAKERGEKCPTKVTNQVFRYAKKAGASYINKPKMRHYVHCYALHCLDEEASNALRRAFKERGENVGAWRQACYKPLVAIAARQGWDIDTIFNAHPRLAIWYVPTKLRQLCHSERSNAAAAAASSSVSGGGGGGDHLPHF.

The interval 154-237 is disordered; that stretch reads EGLSEEPVQQ…DASGGISERQ (84 aa). Residues 210–225 show a composition bias toward acidic residues; it reads AEEDEETEEGQEDDWN. DNA-binding regions lie at residues 238-242, 307-314, and 378-381; these read REHPF, NKPKMRHY, and YVPT.

Belongs to the FLO/LFY family. In terms of tissue distribution, expressed in floral meristems and in indeterminate vegetative meristems.

Its subcellular location is the nucleus. Probable transcription factor that act to specify determinacy in the progenitor cells for both flowers and leaves. In Nicotiana tabacum (Common tobacco), this protein is Floricaula/leafy homolog 2 (FL2).